Consider the following 67-residue polypeptide: Alpha-conotoxin-like Qc1.1a (67 aa).

The N-terminal stretch at 1-21 is a signal peptide; sequence MGMRMMFTMFLLVVLAITVVS. The propeptide occupies 22–46; sequence FTSDHASDGRNTAANDKASNLMALR. 2 disulfide bridges follow: cysteine 49–cysteine 55 and cysteine 50–cysteine 63. The segment at 51–53 is lacks the Ser-Xaa-Pro motif that is crucial for potent interaction with nAChR; sequence PDP.

The protein belongs to the conotoxin A superfamily. Expressed by the venom duct.

It is found in the secreted. Alpha-conotoxins act on postsynaptic membranes, they bind to the nicotinic acetylcholine receptors (nAChR) and thus inhibit them. Has possibly a distinct nAChR binding mode from other alpha-conotoxins, due to a different three residue motif (lacks the Ser-Xaa-Pro motif). The sequence is that of Alpha-conotoxin-like Qc1.1a from Conus quercinus (Oak cone).